Here is a 351-residue protein sequence, read N- to C-terminus: UDP-N-acetylglucosamine--N-acetylmuramyl-(pentapeptide) pyrophosphoryl-undecaprenol N-acetylglucosamine transferase (351 aa).

UDP-N-acetyl-alpha-D-glucosamine is bound by residues 11-13 (TGG), asparagine 120, arginine 161, serine 187, and glutamine 281.

This sequence belongs to the glycosyltransferase 28 family. MurG subfamily.

The protein localises to the cell inner membrane. The enzyme catalyses di-trans,octa-cis-undecaprenyl diphospho-N-acetyl-alpha-D-muramoyl-L-alanyl-D-glutamyl-meso-2,6-diaminopimeloyl-D-alanyl-D-alanine + UDP-N-acetyl-alpha-D-glucosamine = di-trans,octa-cis-undecaprenyl diphospho-[N-acetyl-alpha-D-glucosaminyl-(1-&gt;4)]-N-acetyl-alpha-D-muramoyl-L-alanyl-D-glutamyl-meso-2,6-diaminopimeloyl-D-alanyl-D-alanine + UDP + H(+). It functions in the pathway cell wall biogenesis; peptidoglycan biosynthesis. Its function is as follows. Cell wall formation. Catalyzes the transfer of a GlcNAc subunit on undecaprenyl-pyrophosphoryl-MurNAc-pentapeptide (lipid intermediate I) to form undecaprenyl-pyrophosphoryl-MurNAc-(pentapeptide)GlcNAc (lipid intermediate II). In Rippkaea orientalis (strain PCC 8801 / RF-1) (Cyanothece sp. (strain PCC 8801)), this protein is UDP-N-acetylglucosamine--N-acetylmuramyl-(pentapeptide) pyrophosphoryl-undecaprenol N-acetylglucosamine transferase.